The sequence spans 3916 residues: Fusarin C synthetase (3916 aa).

The 432-residue stretch at 9-440 (KEPIAIIGTS…GTNVHAIIEQ (432 aa)) folds into the Ketosynthase family 3 (KS3) domain. Residues Cys182, His319, and His360 each act as for beta-ketoacyl synthase activity in the active site. A malonyl-CoA:ACP transacylase (MAT) domain region spans residues 548 to 869 (VFTGQGAQWP…VTRNIHDVEA (322 aa)). The tract at residues 935-1068 (HPLLGARSVE…GQLRVEFSSL (134 aa)) is N-terminal hotdog fold. The tract at residues 935 to 1228 (HPLLGARSVE…GLTCTSLLRP (294 aa)) is dehydratase (DH) domain. In terms of domain architecture, PKS/mFAS DH spans 935 to 1231 (HPLLGARSVE…CTSLLRPGPS (297 aa)). The Proton acceptor; for dehydratase activity role is filled by His967. A C-terminal hotdog fold region spans residues 1084–1231 (LTSVDMERFY…CTSLLRPGPS (148 aa)). The Proton donor; for dehydratase activity role is filled by Asp1141. Positions 1350–1584 (VGENLPAVVR…YMTSVMLSQA (235 aa)) are C-methyltransferase (CMeT) domain. The interval 2092-2266 (TYLLIGFTGG…AASVMHIGMV (175 aa)) is ketoreductase (KR) domain 1. The Carrier 1 domain maps to 2372–2449 (EILAVVEEEF…ELCSTVVSHL (78 aa)). Position 2409 is an O-(pantetheine 4'-phosphoryl)serine (Ser2409). The tract at residues 2482–2511 (ASPTENEPFTIRNSPNSTQVTSESGVDEET) is disordered. The segment covering 2486–2505 (ENEPFTIRNSPNSTQVTSES) has biased composition (polar residues). The segment at 2522–2806 (PLSFAQERLW…VNLLPLRLKL (285 aa)) is condensation. Residues 2973 to 3385 (FEKCVVNQPD…RIAGDSQIKL (413 aa)) are adenylation. The 78-residue stretch at 3493–3570 (KPLTETQERL…EMAAKIDGFT (78 aa)) folds into the Carrier 2 domain. Residue Ser3530 is modified to O-(pantetheine 4'-phosphoryl)serine. A thiolester reductase (R) domain region spans residues 3612-3833 (LTGATGFLGV…DFVPVDVVAA (222 aa)).

In the C-terminal section; belongs to the NRP synthetase family.

The protein operates within mycotoxin biosynthesis. In terms of biological role, fusarin C synthetase; part of the gene cluster that mediates the biosynthesis of the mycotoxin fusarin C. Within the cluster, FUS1, FUS2, FUS8 and FUS9 are sufficient for fusarin production. The roles of the other FUS members are yet undetermined. The fusarin C synthetase FUS1 is responsible for the condensation of one acetyl-coenzyme A (CoA) unit with six malonyl-CoA units and the amide linkage of the arising heptaketide and homoserine, subsequently releasing the first intermediate, prefusarin, as an alcohol with an open ring structure. The cytochrome P450 monooxygenase FUS8 participates in multiple oxidation processes at carbon C-20 and is able to use the FUS1 product as substrate, resulting in formation of 20-hydroxy-prefusarin. This reaction seems to be essential before the 2-pyrrolidone ring closure can be catalyzed by FUS2, generating 20-hydroxy-fusarin. FUS8 is able to further oxidizes carbon C-20 after ring closure, resulting in the formation of carboxy-fusarin C. As the last step, FUS9 methylates the hydroxyl group at C-21 to generate fusarin C. Fusarin C can then rearrange to epi-fusarin C, the (z)-isomers, and fusarin A and fusarin D. This Gibberella moniliformis (strain M3125 / FGSC 7600) (Maize ear and stalk rot fungus) protein is Fusarin C synthetase.